A 260-amino-acid polypeptide reads, in one-letter code: Resolvase (260 aa).

The region spanning 38–241 (ELPKYLLAPE…FALDVAARHR (204 aa)) is the Tyr recombinase domain. Residues R73, K105, H193, R196, and H219 contribute to the active site. The active-site O-(3'-phospho-DNA)-tyrosine intermediate is the Y228.

Belongs to the 'phage' integrase family.

Its function is as follows. This resolvase acts at the RfsF equivalent resolution sequence of pColBM-CL139. The sequence is that of Resolvase (resD) from Escherichia coli.